The sequence spans 154 residues: Large ribosomal subunit protein uL13 (154 aa).

Belongs to the universal ribosomal protein uL13 family. As to quaternary structure, part of the 50S ribosomal subunit.

Functionally, this protein is one of the early assembly proteins of the 50S ribosomal subunit, although it is not seen to bind rRNA by itself. It is important during the early stages of 50S assembly. This is Large ribosomal subunit protein uL13 from Bradyrhizobium diazoefficiens (strain JCM 10833 / BCRC 13528 / IAM 13628 / NBRC 14792 / USDA 110).